Consider the following 298-residue polypeptide: Aspartate carbamoyltransferase catalytic subunit (298 aa).

Carbamoyl phosphate contacts are provided by R50 and T51. K79 is an L-aspartate binding site. Carbamoyl phosphate contacts are provided by R100, H128, and Q131. L-aspartate is bound by residues R161 and R220. Positions 259 and 260 each coordinate carbamoyl phosphate.

The protein belongs to the aspartate/ornithine carbamoyltransferase superfamily. ATCase family. Heterooligomer of catalytic and regulatory chains.

The catalysed reaction is carbamoyl phosphate + L-aspartate = N-carbamoyl-L-aspartate + phosphate + H(+). It participates in pyrimidine metabolism; UMP biosynthesis via de novo pathway; (S)-dihydroorotate from bicarbonate: step 2/3. Catalyzes the condensation of carbamoyl phosphate and aspartate to form carbamoyl aspartate and inorganic phosphate, the committed step in the de novo pyrimidine nucleotide biosynthesis pathway. This Sulfurisphaera tokodaii (strain DSM 16993 / JCM 10545 / NBRC 100140 / 7) (Sulfolobus tokodaii) protein is Aspartate carbamoyltransferase catalytic subunit.